A 111-amino-acid chain; its full sequence is Small ribosomal subunit protein bS16 (111 aa).

Belongs to the bacterial ribosomal protein bS16 family.

This Rickettsia africae (strain ESF-5) protein is Small ribosomal subunit protein bS16.